The following is a 145-amino-acid chain: 3-dehydroquinate dehydratase (145 aa).

The active-site Proton acceptor is the Y23. Substrate contacts are provided by N74, H80, and D87. The Proton donor role is filled by H100. Residues 101-102 (LS) and R111 each bind substrate.

Belongs to the type-II 3-dehydroquinase family. Homododecamer.

The catalysed reaction is 3-dehydroquinate = 3-dehydroshikimate + H2O. It functions in the pathway metabolic intermediate biosynthesis; chorismate biosynthesis; chorismate from D-erythrose 4-phosphate and phosphoenolpyruvate: step 3/7. Catalyzes a trans-dehydration via an enolate intermediate. The sequence is that of 3-dehydroquinate dehydratase from Bacillus licheniformis (strain ATCC 14580 / DSM 13 / JCM 2505 / CCUG 7422 / NBRC 12200 / NCIMB 9375 / NCTC 10341 / NRRL NRS-1264 / Gibson 46).